Reading from the N-terminus, the 274-residue chain is MSSFLVRPFCLRATTTTTTTTTTTALVQQQLRALTTTTALTYHQPRVPSSAIPIPNVSGRVPLPDSTPVPEDFKIEIPSYPYGPRRVYHQSNTGLYGSALIRFGNNVSKRNEIKTRRKWRPNVQQKRLWSKSLGVFVRTRVTTRVLRTIDKVGGLDEYLLGHKAARVKELGPWGWMLRWRIMQTPEIRERFAKEREALGLPPRREEDEEKSLEEQLREFQVAGIQFAEGKAPKTKGQLKEEADRLIKKSETEEFGLGQEEDLFMKEEPKPTKMA.

The disordered stretch occupies residues 249–274 (SETEEFGLGQEEDLFMKEEPKPTKMA). Residues 262-274 (LFMKEEPKPTKMA) show a composition bias toward basic and acidic residues.

It belongs to the bacterial ribosomal protein bL28 family. In terms of assembly, component of the mitochondrial large ribosomal subunit (mt-LSU). Mature N.crassa 74S mitochondrial ribosomes consist of a small (37S) and a large (54S) subunit. The 37S small subunit contains a 16S ribosomal RNA (16S mt-rRNA) and 32 different proteins. The 54S large subunit contains a 23S rRNA (23S mt-rRNA) and 42 different proteins.

Its subcellular location is the mitochondrion. Functionally, component of the mitochondrial ribosome (mitoribosome), a dedicated translation machinery responsible for the synthesis of mitochondrial genome-encoded proteins, including at least some of the essential transmembrane subunits of the mitochondrial respiratory chain. The mitoribosomes are attached to the mitochondrial inner membrane and translation products are cotranslationally integrated into the membrane. The sequence is that of Large ribosomal subunit protein bL28m (mrpl24) from Neurospora crassa (strain ATCC 24698 / 74-OR23-1A / CBS 708.71 / DSM 1257 / FGSC 987).